A 122-amino-acid chain; its full sequence is Ferredoxin (122 aa).

A disordered region spans residues 1–33 (MSHDRRLTVGSLLPNQPRPVAVPKAPSVVQPSK). Residues 8–14 (TVGSLLP) form a targeting peptide region. The 2Fe-2S ferredoxin-type domain occupies 40-122 (AIIRLEQNGR…FRLACQANME (83 aa)). Positions 75, 80, 83, and 117 each coordinate [2Fe-2S] cluster.

It belongs to the 2Fe2S plant-type ferredoxin family. [2Fe-2S] cluster serves as cofactor.

Its subcellular location is the encapsulin nanocompartment. In terms of biological role, cargo protein of a type 1 encapsulin nanocompartment. An iron-binding protein probably involved in iron mineralization in the encapsulin nanocompartment. 2 different cargo proteins have been identified (IMEF and Fer); when both are expressed in E.coli with the shell protein only IMEF is detected within the nanocompartment. E.coli expressing all 3 genes stores the largest amount of iron and is protected from Fe/H2O2-induced oxidative stress. In Bacillus thermotolerans (Quasibacillus thermotolerans), this protein is Ferredoxin.